Consider the following 93-residue polypeptide: Putative aspartate aminotransferase (93 aa).

It belongs to the class-I pyridoxal-phosphate-dependent aminotransferase family. In terms of assembly, homodimer. Requires pyridoxal 5'-phosphate as cofactor.

The protein localises to the cytoplasm. The catalysed reaction is L-aspartate + 2-oxoglutarate = oxaloacetate + L-glutamate. This chain is Putative aspartate aminotransferase, found in Methylorubrum extorquens (Methylobacterium dichloromethanicum).